A 505-amino-acid chain; its full sequence is AMP phosphorylase 2 (505 aa).

Residues G169, 195–200 (SRAITT), T204, S265, and K289 contribute to the AMP site.

This sequence belongs to the thymidine/pyrimidine-nucleoside phosphorylase family. Type 2 subfamily.

The catalysed reaction is AMP + phosphate = alpha-D-ribose 1,5-bisphosphate + adenine. The enzyme catalyses CMP + phosphate = cytosine + alpha-D-ribose 1,5-bisphosphate. It catalyses the reaction UMP + phosphate = alpha-D-ribose 1,5-bisphosphate + uracil. Functionally, catalyzes the conversion of AMP and phosphate to adenine and ribose 1,5-bisphosphate (R15P). Exhibits phosphorylase activity toward CMP and UMP in addition to AMP. Functions in an archaeal AMP degradation pathway, together with R15P isomerase and RubisCO. The polypeptide is AMP phosphorylase 2 (Archaeoglobus fulgidus (strain ATCC 49558 / DSM 4304 / JCM 9628 / NBRC 100126 / VC-16)).